An 813-amino-acid chain; its full sequence is MNSTFVQIPKLNINKQVKKKTDSITANTLLPKLMNDTSIQQPNQQQQQQQPQQPQQVTNGITILQNYQPQQPQPATTTTQQLNSANNTPTLVSTKKSVIGINEIPEHLLIRDIIYVFQGIDGTYIKYNKQSDSFKIDENTSNTLVNGEPAYISKPKRDLVYRLCEFGWLFKKVRLFITNNDFKKTGLTNQSFCSAINDELIELYRIIAILETQVYKKFDMVNYGGGGGGSGGSGSGSGLESPSSVSSGGTTTSTEIPFIDGDSLTLIRLFVWIQSPLKRLKVLGTCVDSITVDMKGGEILSKIDTLSKHGDQDIRILIHNIMFKICQPLFSMIRLWMFKGEINDPYQEFFIRQYESVQLEKTWKEKFAIVARLLPSFISLPLSKRILIIGKSINYMKQFCNNFKEDKNDRYYYYNQEDDDDDDEDHDDNDDDDENENQGEDDEIIERKLLIKESKIIKEKTKELNYINKEVLQEIIELVSRQSSERLLKIVLNRFKFMNHVKALKKYLLLGQGDFIQYLMDLIGEDLLKPTSQIQRHKLVGWMDTAIRNSNAQFEEQDIVNRLDIALLPERPGNIGWDIFSLDYHVDTPLNTILSPNDILRYKKIFHFMWGIKRVEYSLASIWRKIRSSTSLSILSPIGGDIHKSHLIMNEMVHFISNFQYYLMFEVLECSWKNLEKFIDQEATDLDQLIEAHHQYLQDICNKMFLSNSDSCYECFKKLLSIIIKFTLLQTKLINLSIAIQNEKNFNETHQAQVNKEFNSFRNHLNNLYQEYTTSFYKFQSEILKVKVNQDLNPISLQYMLDFNEYYEEKKDN.

Low complexity-rich tracts occupy residues 69-81 (PQQP…TTQQ) and 238-252 (GLES…GTTT). Disordered regions lie at residues 69–88 (PQQP…ANNT), 231–252 (GGSG…GTTT), and 414–439 (YNQE…ENQG). A compositionally biased stretch (acidic residues) spans 416–439 (QEDDDDDDEDHDDNDDDDENENQG).

The protein belongs to the TUBGCP family. As to quaternary structure, gamma-tubulin small complex (Gamma TuSC) consists of gamma-tubulin and SPC98.

Its subcellular location is the cytoplasm. It is found in the cytoskeleton. The protein resides in the microtubule organizing center. The protein localises to the centrosome. Its function is as follows. May be involved in microtubule nucleation. The sequence is that of Spindle pole body component 98 (spc98) from Dictyostelium discoideum (Social amoeba).